The primary structure comprises 457 residues: MEDSGFSGVVRLSNVSDFIAPNLDCIIPLETRTVEKKKEESQVNIRTKKPKDKESSKTEEKKSVKISLADCLACSGCITSAETVLVEEQSFGRVYEGIQNSKLSVVTVSPQAITSIAVKIGKSTNEVAKIIASFFRRLGVKYVIDSSFARKFAHSLIYEELSTTPSTSRPLLSSACPGFVCYAEKSHGELLIPKISKIRSPQAISGAIIKGFLAKREGLSPCDVFHAAVMPCFDKKLEASREQFKVDGTDVRETDCVISTAELLEEIIKLENDEAGDVENRSEEEQWLSALSKGSVIGDDGGASGGYADRIVRDFVLENGGGIVKTSKLNKNMFSTTVESEAGEILLRVAKVYGFRNVQNLVRKMKTKKEKTDYVEIMACPGGCANGGGQIRYETMDEREEKLIKVEALYEDLPRQDDEETWIKVREEWEKLDKNYRNLLFTDYRPVETNVAQVLKW.

C25 lines the [4Fe-4S] cluster pocket. A disordered region spans residues 38–59 (KEESQVNIRTKKPKDKESSKTE). The [4Fe-4S] cluster site is built by C71, C74, C77, C176, C232, C380, and C384.

It belongs to the NARF family.

Its function is as follows. Component of the cytosolic iron-sulfur (Fe/S) protein assembly machinery. Required for maturation of extramitochondrial Fe/S proteins. In Caenorhabditis elegans, this protein is Probable cytosolic Fe-S cluster assembly factor oxy-4 (oxy-4).